An 886-amino-acid polypeptide reads, in one-letter code: DNA gyrase subunit A (886 aa).

Residues 35 to 501 (LPDVRDGLKP…GFEDLEDEDL (467 aa)) enclose the Topo IIA-type catalytic domain. Tyr123 serves as the catalytic O-(5'-phospho-DNA)-tyrosine intermediate. The GyrA-box motif lies at 528–534 (QNRGGRG). A disordered region spans residues 810-860 (VKEDADEENEDEQSTVSEDGTEQQREAVVNDETPGNAIHTEVIDSEVNDED). Acidic residues predominate over residues 813-822 (DADEENEDEQ).

This sequence belongs to the type II topoisomerase GyrA/ParC subunit family. As to quaternary structure, heterotetramer, composed of two GyrA and two GyrB chains. In the heterotetramer, GyrA contains the active site tyrosine that forms a transient covalent intermediate with DNA, while GyrB binds cofactors and catalyzes ATP hydrolysis.

It localises to the cytoplasm. It carries out the reaction ATP-dependent breakage, passage and rejoining of double-stranded DNA.. In terms of biological role, a type II topoisomerase that negatively supercoils closed circular double-stranded (ds) DNA in an ATP-dependent manner to modulate DNA topology and maintain chromosomes in an underwound state. Negative supercoiling favors strand separation, and DNA replication, transcription, recombination and repair, all of which involve strand separation. Also able to catalyze the interconversion of other topological isomers of dsDNA rings, including catenanes and knotted rings. Type II topoisomerases break and join 2 DNA strands simultaneously in an ATP-dependent manner. The protein is DNA gyrase subunit A of Staphylococcus aureus (strain MRSA252).